The chain runs to 725 residues: Fatty acid oxidation complex subunit alpha (725 aa).

The segment at 1–189 (MIYQGENLSV…ALGMIDGVVS (189 aa)) is enoyl-CoA hydratase/isomerase. Asp-296 contributes to the substrate binding site. The segment at 311-725 (EPVTSAAVLG…APQSLSAPSA (415 aa)) is 3-hydroxyacyl-CoA dehydrogenase. Residues Met-324, Asp-343, 400–402 (VVE), Lys-407, and Ser-429 each bind NAD(+). His-450 acts as the For 3-hydroxyacyl-CoA dehydrogenase activity in catalysis. Asn-453 contacts NAD(+). Substrate is bound by residues Asn-500 and Tyr-660.

It in the N-terminal section; belongs to the enoyl-CoA hydratase/isomerase family. This sequence in the C-terminal section; belongs to the 3-hydroxyacyl-CoA dehydrogenase family. In terms of assembly, heterotetramer of two alpha chains (FadB) and two beta chains (FadA).

The catalysed reaction is a (3S)-3-hydroxyacyl-CoA + NAD(+) = a 3-oxoacyl-CoA + NADH + H(+). It carries out the reaction a (3S)-3-hydroxyacyl-CoA = a (2E)-enoyl-CoA + H2O. The enzyme catalyses a 4-saturated-(3S)-3-hydroxyacyl-CoA = a (3E)-enoyl-CoA + H2O. It catalyses the reaction (3S)-3-hydroxybutanoyl-CoA = (3R)-3-hydroxybutanoyl-CoA. The catalysed reaction is a (3Z)-enoyl-CoA = a 4-saturated (2E)-enoyl-CoA. It carries out the reaction a (3E)-enoyl-CoA = a 4-saturated (2E)-enoyl-CoA. It participates in lipid metabolism; fatty acid beta-oxidation. In terms of biological role, involved in the aerobic and anaerobic degradation of long-chain fatty acids via beta-oxidation cycle. Catalyzes the formation of 3-oxoacyl-CoA from enoyl-CoA via L-3-hydroxyacyl-CoA. It can also use D-3-hydroxyacyl-CoA and cis-3-enoyl-CoA as substrate. This Aliivibrio fischeri (strain MJ11) (Vibrio fischeri) protein is Fatty acid oxidation complex subunit alpha.